The primary structure comprises 125 residues: Sulfiredoxin, chloroplastic/mitochondrial (125 aa).

The N-terminal 22 residues, 1–22 (MANLMMRLPISLRSFSVSASSS), are a transit peptide targeting the chloroplast and mitochondrion.

The protein belongs to the sulfiredoxin family. Low expression in photosynthetic tissues such as leaves and sepals.

Its subcellular location is the plastid. It is found in the chloroplast. The protein localises to the mitochondrion. It carries out the reaction S-hydroxy-S-oxy-L-cysteinyl-[peroxiredoxin] + [protein]-dithiol + ATP = S-hydroxy-L-cysteinyl-[peroxiredoxin] + [protein]-disulfide + ADP + phosphate. Contributes to oxidative stress resistance by reducing cysteine-sulfinic acid formed under exposure to oxidants in a peroxiredoxin. May catalyze the reduction in a multi-step process by acting both as a specific phosphotransferase and a thioltransferase. Required to switch on the antioxidant pathway to regenerate the oxidative damage. In mitochondrion, catalyzes the retroreduction of the inactive sulfinic form of atypical Prx IIF using thioredoxin as reducing agent. The sequence is that of Sulfiredoxin, chloroplastic/mitochondrial (SRX) from Arabidopsis thaliana (Mouse-ear cress).